Reading from the N-terminus, the 141-residue chain is Hemoglobin subunit alpha (141 aa).

The region spanning 1–141 (VLSANDKSNV…VSTVLTSKYR (141 aa)) is the Globin domain. Ser3 bears the Phosphoserine mark. Lys7 and Lys11 each carry N6-succinyllysine. Lys16 bears the N6-acetyllysine; alternate mark. At Lys16 the chain carries N6-succinyllysine; alternate. Tyr24 carries the phosphotyrosine modification. At Ser35 the chain carries Phosphoserine. An N6-succinyllysine modification is found at Lys40. Position 49 is a phosphoserine (Ser49). His58 is an O2 binding site. His87 lines the heme b pocket. The residue at position 102 (Ser102) is a Phosphoserine. A Phosphothreonine modification is found at Thr108. Phosphoserine is present on Ser124. Phosphothreonine is present on residues Thr134 and Thr137. Ser138 carries the phosphoserine modification.

It belongs to the globin family. In terms of assembly, heterotetramer of two alpha chains and two beta chains. In terms of tissue distribution, red blood cells.

Involved in oxygen transport from the lung to the various peripheral tissues. In terms of biological role, hemopressin acts as an antagonist peptide of the cannabinoid receptor CNR1. Hemopressin-binding efficiently blocks cannabinoid receptor CNR1 and subsequent signaling. This is Hemoglobin subunit alpha (HBA) from Hippopotamus amphibius (Hippopotamus).